We begin with the raw amino-acid sequence, 304 residues long: MSWIERIKSNITPTRKASIPEGVWTKCDSCGQVLYRAELERNLEVCPKCDHHMRMSARNRLHSLLDEGSLVELGSELEPKDVLKFRDSKKYKDRLASAQKETGEKDALVVMKGTLHGMPVVAAAFEFAFMGGSMGSVVGARFVRAVEQALEDNCPLVCFSASGGARMQEALMSLMQMAKTSAALAKMQERGLPYISVLTDPTMGGVSASFAMLGDLNIAEPKALIGFAGPRVIEQTVREKLPPGFQRSEFLIEKGAIDMIVRRPEMRLKLASILAKLMNLPAPNPDAPREGVVVPPAPDQESEA.

The region spanning 23–292 (VWTKCDSCGQ…PNPDAPREGV (270 aa)) is the CoA carboxyltransferase N-terminal domain. Zn(2+) is bound by residues Cys27, Cys30, Cys46, and Cys49. The C4-type zinc-finger motif lies at 27–49 (CDSCGQVLYRAELERNLEVCPKC). The disordered stretch occupies residues 283–304 (PNPDAPREGVVVPPAPDQESEA).

Belongs to the AccD/PCCB family. As to quaternary structure, acetyl-CoA carboxylase is a heterohexamer composed of biotin carboxyl carrier protein (AccB), biotin carboxylase (AccC) and two subunits each of ACCase subunit alpha (AccA) and ACCase subunit beta (AccD). Requires Zn(2+) as cofactor.

The protein resides in the cytoplasm. The catalysed reaction is N(6)-carboxybiotinyl-L-lysyl-[protein] + acetyl-CoA = N(6)-biotinyl-L-lysyl-[protein] + malonyl-CoA. Its pathway is lipid metabolism; malonyl-CoA biosynthesis; malonyl-CoA from acetyl-CoA: step 1/1. Functionally, component of the acetyl coenzyme A carboxylase (ACC) complex. Biotin carboxylase (BC) catalyzes the carboxylation of biotin on its carrier protein (BCCP) and then the CO(2) group is transferred by the transcarboxylase to acetyl-CoA to form malonyl-CoA. In Salmonella agona (strain SL483), this protein is Acetyl-coenzyme A carboxylase carboxyl transferase subunit beta.